Consider the following 121-residue polypeptide: Ribonuclease P protein component 4 (121 aa).

Residues Cys-63, Cys-66, Cys-89, and Cys-92 each contribute to the Zn(2+) site.

The protein belongs to the eukaryotic/archaeal RNase P protein component 4 family. As to quaternary structure, consists of a catalytic RNA component and at least 4-5 protein subunits. Zn(2+) serves as cofactor.

The protein localises to the cytoplasm. The catalysed reaction is Endonucleolytic cleavage of RNA, removing 5'-extranucleotides from tRNA precursor.. Part of ribonuclease P, a protein complex that generates mature tRNA molecules by cleaving their 5'-ends. The sequence is that of Ribonuclease P protein component 4 from Methanobrevibacter smithii (strain ATCC 35061 / DSM 861 / OCM 144 / PS).